The chain runs to 406 residues: Tryptophan synthase beta chain (406 aa).

An N6-(pyridoxal phosphate)lysine modification is found at K99.

The protein belongs to the TrpB family. In terms of assembly, tetramer of two alpha and two beta chains. The cofactor is pyridoxal 5'-phosphate.

The enzyme catalyses (1S,2R)-1-C-(indol-3-yl)glycerol 3-phosphate + L-serine = D-glyceraldehyde 3-phosphate + L-tryptophan + H2O. The protein operates within amino-acid biosynthesis; L-tryptophan biosynthesis; L-tryptophan from chorismate: step 5/5. The beta subunit is responsible for the synthesis of L-tryptophan from indole and L-serine. The chain is Tryptophan synthase beta chain (trpB) from Caulobacter vibrioides (strain ATCC 19089 / CIP 103742 / CB 15) (Caulobacter crescentus).